The primary structure comprises 168 residues: Translationally-controlled tumor protein homolog (168 aa).

In terms of domain architecture, TCTP spans Met1–Phe168. Ser78 is subject to Phosphoserine.

Belongs to the TCTP family.

The protein resides in the cytoplasm. Functionally, involved in calcium binding and microtubule stabilization. May be a guanine nucleotide-free chaperone (GFC). This Schizosaccharomyces pombe (strain 972 / ATCC 24843) (Fission yeast) protein is Translationally-controlled tumor protein homolog (p23fy).